A 334-amino-acid chain; its full sequence is Methionine adenosyltransferase 2 subunit beta (334 aa).

NADP(+) contacts are provided by residues 37–40 (TGLL), 60–62 (FRR), 71–72 (NL), cysteine 93, arginine 97, tyrosine 159, and leucine 185. Phosphothreonine is present on threonine 309. The tract at residues 319–334 (LWPFLIDKRWRQTVFH) is required for interaction with MAT2A.

This sequence belongs to the dTDP-4-dehydrorhamnose reductase family. MAT2B subfamily. Heterotrimer; composed of a catalytic MAT2A homodimer that binds one regulatory MAT2B chain. Heterohexamer; composed of a central, catalytic MAT2A homotetramer flanked on either side by a regulatory MAT2B chain. NADP binding increases the affinity for MAT2A.

The protein operates within amino-acid biosynthesis; S-adenosyl-L-methionine biosynthesis; S-adenosyl-L-methionine from L-methionine: step 1/1. In terms of biological role, regulatory subunit of S-adenosylmethionine synthetase 2, an enzyme that catalyzes the formation of S-adenosylmethionine from methionine and ATP. Regulates MAT2A catalytic activity by changing its kinetic properties, increasing its affinity for L-methionine. Can bind NADP (in vitro). In Pongo abelii (Sumatran orangutan), this protein is Methionine adenosyltransferase 2 subunit beta (MAT2B).